The primary structure comprises 196 residues: Pyridoxal 5'-phosphate synthase subunit PdxT (196 aa).

L-glutamine is bound at residue 52-54 (GES). Cysteine 84 serves as the catalytic Nucleophile. Residues arginine 113 and 141–142 (IR) contribute to the L-glutamine site. Catalysis depends on charge relay system residues histidine 178 and glutamate 180.

The protein belongs to the glutaminase PdxT/SNO family. As to quaternary structure, in the presence of PdxS, forms a dodecamer of heterodimers. Only shows activity in the heterodimer.

The catalysed reaction is aldehydo-D-ribose 5-phosphate + D-glyceraldehyde 3-phosphate + L-glutamine = pyridoxal 5'-phosphate + L-glutamate + phosphate + 3 H2O + H(+). It catalyses the reaction L-glutamine + H2O = L-glutamate + NH4(+). It functions in the pathway cofactor biosynthesis; pyridoxal 5'-phosphate biosynthesis. Catalyzes the hydrolysis of glutamine to glutamate and ammonia as part of the biosynthesis of pyridoxal 5'-phosphate. The resulting ammonia molecule is channeled to the active site of PdxS. This Pyrococcus horikoshii (strain ATCC 700860 / DSM 12428 / JCM 9974 / NBRC 100139 / OT-3) protein is Pyridoxal 5'-phosphate synthase subunit PdxT.